The sequence spans 4351 residues: Protocadherin Fat 2 (4351 aa).

Positions 1–18 (MTLVLLGLAILLLHRAAC) are cleaved as a signal peptide. Residues 19 to 4050 (EKSLEETIPP…IKRGDWGQQE (4032 aa)) are Extracellular-facing. Cadherin domains lie at 34 to 148 (THSL…KPLF) and 149 to 256 (SPPS…PPAI). N-linked (GlcNAc...) asparagine glycosylation is found at Asn-39, Asn-210, Asn-280, and Asn-330. 31 consecutive Cadherin domains span residues 363-458 (EKAV…APVF), 459-564 (NRSS…QPMF), 565-669 (EEVN…VPVQ), 716-820 (DHFP…PPRF), 821-925 (PPGG…PPQC), 926-1032 (ITEH…SPHF), 1033-1142 (SSFV…RPVF), 1138-1242 (SRPV…PPMF), 1243-1346 (SHKL…SSIP), 1350-1448 (DESY…RPQF), 1449-1555 (LQDH…SPHF), 1556-1660 (TQLR…APVF), 1661-1758 (SKDE…PPAF), 1759-1872 (GKPT…PPRF), 1873-1968 (SEQI…SLQF), 1969-2070 (DQDV…IPEF), 2071-2171 (QHLP…NPLF), 2172-2272 (QSPY…PPTF), 2273-2379 (SQLV…PPKF), 2380-2481 (REPQ…SPEF), 2482-2585 (QQNV…APQF), 2586-2692 (KASG…LPKF), 2693-2799 (SEPL…RPVF), 2800-2908 (EADP…PPRF), 2909-3013 (ASED…SPQC), 3014-3115 (SQLL…APRF), 3116-3220 (FPSH…LPIF), 3221-3323 (LNAE…HPRF), 3324-3428 (THDL…PPRF), 3429-3533 (FQLN…PPST), and 3534-3631 (LPLE…VPQQ). Residues Asn-459, Asn-568, Asn-627, and Asn-789 are each glycosylated (N-linked (GlcNAc...) asparagine). Asn-996 carries N-linked (GlcNAc...) asparagine glycosylation. N-linked (GlcNAc...) asparagine glycosylation is found at Asn-1175, Asn-1276, and Asn-1417. N-linked (GlcNAc...) asparagine glycans are attached at residues Asn-1899, Asn-1998, Asn-2007, Asn-2102, Asn-2165, Asn-2183, Asn-2325, Asn-2368, Asn-2387, Asn-2430, Asn-2470, Asn-2547, and Asn-2597. N-linked (GlcNAc...) asparagine glycosylation is found at Asn-3127, Asn-3278, and Asn-3312. 8 N-linked (GlcNAc...) asparagine glycosylation sites follow: Asn-3432, Asn-3603, Asn-3770, Asn-3774, Asn-3815, Asn-3842, Asn-3875, and Asn-3906. The 172-residue stretch at 3775 to 3946 (GTTLRFSGQS…RLETWALSQC (172 aa)) folds into the Laminin G-like domain. Cystine bridges form between Cys-3914-Cys-3946, Cys-3953-Cys-3964, Cys-3958-Cys-3974, and Cys-3976-Cys-3985. 2 EGF-like domains span residues 3949–3986 (PGTA…RNCE) and 3988–4024 (GREN…DRCE). Asn-3991 carries N-linked (GlcNAc...) asparagine glycosylation. Cystine bridges form between Cys-3992-Cys-4003, Cys-3997-Cys-4012, and Cys-4014-Cys-4023. Residues 4051–4071 (FLVITVALPLVIIATVGLLLY) traverse the membrane as a helical segment. Topologically, residues 4072–4351 (CRRRKSHKPV…DYGSCEEVMF (280 aa)) are cytoplasmic. The segment at 4316–4340 (VNGGPATGRSQPRAPPNYEGSDMVE) is disordered.

As to quaternary structure, homodimer. In terms of tissue distribution, cerebellum-specific expression. Expressed in thin parallel fibers of cerebellar granule cells.

It localises to the cell membrane. Its subcellular location is the cell junction. It is found in the golgi apparatus. The protein resides in the trans-Golgi network. Functionally, involved in the regulation of cell migration. May be involved in mediating the organization of the parallel fibers of granule cells during cerebellar development. The polypeptide is Protocadherin Fat 2 (Fat2) (Rattus norvegicus (Rat)).